Here is a 476-residue protein sequence, read N- to C-terminus: Ribulose bisphosphate carboxylase large chain (476 aa).

Substrate-binding residues include N124 and T174. K176 (proton acceptor) is an active-site residue. K178 contacts substrate. Mg(2+)-binding residues include K202, D204, and E205. Position 202 is an N6-carboxylysine (K202). The active-site Proton acceptor is H295. Positions 296, 328, and 380 each coordinate substrate.

Belongs to the RuBisCO large chain family. Type I subfamily. In terms of assembly, heterohexadecamer of 8 large chains and 8 small chains; disulfide-linked. The disulfide link is formed within the large subunit homodimers. Requires Mg(2+) as cofactor. In terms of processing, the disulfide bond which can form in the large chain dimeric partners within the hexadecamer appears to be associated with oxidative stress and protein turnover.

The protein resides in the carboxysome. The enzyme catalyses 2 (2R)-3-phosphoglycerate + 2 H(+) = D-ribulose 1,5-bisphosphate + CO2 + H2O. It catalyses the reaction D-ribulose 1,5-bisphosphate + O2 = 2-phosphoglycolate + (2R)-3-phosphoglycerate + 2 H(+). Its function is as follows. RuBisCO catalyzes two reactions: the carboxylation of D-ribulose 1,5-bisphosphate, the primary event in carbon dioxide fixation, as well as the oxidative fragmentation of the pentose substrate in the photorespiration process. Both reactions occur simultaneously and in competition at the same active site. This Trichodesmium erythraeum (strain IMS101) protein is Ribulose bisphosphate carboxylase large chain.